The following is a 318-amino-acid chain: Retinol dehydrogenase 11 (318 aa).

A helical; Signal-anchor for type II membrane protein transmembrane segment spans residues 1–21 (MVELMFPLLLLLLPFLLYMAA). The Cytoplasmic portion of the chain corresponds to 22–318 (PQIRKMLSSG…SCDLLGLPID (297 aa)). Residue 48 to 54 (GANTGIG) coordinates NADP(+). Lysine 112 carries the N6-acetyllysine modification. Residue serine 177 participates in substrate binding. The Proton acceptor role is filled by tyrosine 202.

Belongs to the short-chain dehydrogenases/reductases (SDR) family. As to quaternary structure, interacts with SELENOF. Post-translationally, not glycosylated. As to expression, predominantly expressed in the epithelial cells of prostate, in both basal and luminal secretory cell populations. Expressed at low levels in spleen, thymus, testis, ovary, small intestine, colon, peripherical blood leukocytes, kidney, adrenal gland and fetal liver. Not detected in prostatic fibromuscular stromal cells, endothelial cells, or infiltrating lymphocytes.

The protein resides in the endoplasmic reticulum membrane. It catalyses the reaction all-trans-retinol + NADP(+) = all-trans-retinal + NADPH + H(+). The enzyme catalyses 11-cis-retinol + NADP(+) = 11-cis-retinal + NADPH + H(+). It carries out the reaction 9-cis-retinol + NADP(+) = 9-cis-retinal + NADPH + H(+). The catalysed reaction is 13-cis-retinol + NADP(+) = 13-cis-retinal + NADPH + H(+). It participates in cofactor metabolism; retinol metabolism. Its activity is regulated as follows. SELENOF decreases the retinol dehydrogenase activity. In terms of biological role, retinol dehydrogenase with a clear preference for NADP. Displays high activity towards 9-cis, 11-cis and all-trans-retinol, and to a lesser extent on 13-cis-retinol. Exhibits a low reductive activity towards unsaturated medium-chain aldehydes such as cis -6-nonenal and no activity toward nonanal or 4-hydroxy-nonenal. Has no dehydrogenase activity towards steroid. The chain is Retinol dehydrogenase 11 (RDH11) from Homo sapiens (Human).